Here is a 130-residue protein sequence, read N- to C-terminus: Small ribosomal subunit protein uS8 (130 aa).

Belongs to the universal ribosomal protein uS8 family. Part of the 30S ribosomal subunit. Contacts proteins S5 and S12.

Functionally, one of the primary rRNA binding proteins, it binds directly to 16S rRNA central domain where it helps coordinate assembly of the platform of the 30S subunit. The chain is Small ribosomal subunit protein uS8 from Aliivibrio fischeri (strain MJ11) (Vibrio fischeri).